Here is a 278-residue protein sequence, read N- to C-terminus: HTH-type transcriptional activator RhaS (278 aa).

Residues 174–272 (NLLLAWLEDH…NWSPRDIRQG (99 aa)) enclose the HTH araC/xylS-type domain. 2 consecutive DNA-binding regions (H-T-H motif) follow at residues 191–212 (DAVADQFSLSLRTLHRQLKQQT) and 239–262 (VTDIAYRCGFSDSNHFSTLFRREF).

As to quaternary structure, binds DNA as a dimer.

The protein resides in the cytoplasm. Activates expression of the rhaBAD and rhaT operons. This is HTH-type transcriptional activator RhaS from Escherichia coli O127:H6 (strain E2348/69 / EPEC).